A 149-amino-acid chain; its full sequence is uncharacterized protein (149 aa).

The disordered stretch occupies residues 1 to 103; that stretch reads MFGLKVKNAE…SPTQGSRLRH (103 aa). Residues 7-18 are compositionally biased toward basic and acidic residues; the sequence is KNAEADTAKSNE. The span at 26 to 41 shows a compositional bias: low complexity; it reads TGSSTTSGSGQSTQRG. Residues 61 to 72 show a composition bias toward polar residues; the sequence is GSQGNSGDQGTE.

The protein belongs to the adhesin P1 family.

This is an uncharacterized protein from Mycoplasma pneumoniae (strain ATCC 29342 / M129 / Subtype 1) (Mycoplasmoides pneumoniae).